The chain runs to 278 residues: Tryptophan synthase alpha chain (278 aa).

Active-site proton acceptor residues include Glu-49 and Asp-60.

The protein belongs to the TrpA family. In terms of assembly, tetramer of two alpha and two beta chains.

It carries out the reaction (1S,2R)-1-C-(indol-3-yl)glycerol 3-phosphate + L-serine = D-glyceraldehyde 3-phosphate + L-tryptophan + H2O. The protein operates within amino-acid biosynthesis; L-tryptophan biosynthesis; L-tryptophan from chorismate: step 5/5. Its function is as follows. The alpha subunit is responsible for the aldol cleavage of indoleglycerol phosphate to indole and glyceraldehyde 3-phosphate. In Granulibacter bethesdensis (strain ATCC BAA-1260 / CGDNIH1), this protein is Tryptophan synthase alpha chain.